A 106-amino-acid chain; its full sequence is Large ribosomal subunit protein uL24 (106 aa).

It belongs to the universal ribosomal protein uL24 family. In terms of assembly, part of the 50S ribosomal subunit.

In terms of biological role, one of two assembly initiator proteins, it binds directly to the 5'-end of the 23S rRNA, where it nucleates assembly of the 50S subunit. One of the proteins that surrounds the polypeptide exit tunnel on the outside of the subunit. In Bordetella avium (strain 197N), this protein is Large ribosomal subunit protein uL24.